Reading from the N-terminus, the 376-residue chain is Histidinol dehydrogenase (376 aa).

2 residues coordinate NAD(+): Tyr100 and Asn182. Substrate-binding residues include Ser205, Gln227, and His230. Residues Gln227 and His230 each contribute to the Zn(2+) site. Active-site proton acceptor residues include Glu275 and His276. Substrate contacts are provided by His276, Asp309, Glu363, and His368. A Zn(2+)-binding site is contributed by Asp309. Position 368 (His368) interacts with Zn(2+).

Belongs to the histidinol dehydrogenase family. Zn(2+) is required as a cofactor.

It carries out the reaction L-histidinol + 2 NAD(+) + H2O = L-histidine + 2 NADH + 3 H(+). It participates in amino-acid biosynthesis; L-histidine biosynthesis; L-histidine from 5-phospho-alpha-D-ribose 1-diphosphate: step 9/9. In terms of biological role, catalyzes the sequential NAD-dependent oxidations of L-histidinol to L-histidinaldehyde and then to L-histidine. The protein is Histidinol dehydrogenase of Thermococcus kodakarensis (strain ATCC BAA-918 / JCM 12380 / KOD1) (Pyrococcus kodakaraensis (strain KOD1)).